A 176-amino-acid chain; its full sequence is MTEGWISLGQLGKPFGIKGWLRFNVRDSILTKVKLPVRLKLGKSDPNFPETEIILLEIRPHNGKFVVRFEGIATPEEAEKWVGGILFLPQNLLPKIETKDEFYVRDLIGLQAIDEFGKSLNWKLTDIQDNPAHPILVFSKSEEEEILIPFLHVFVGELNLEKKTIVLIQPELWNEV.

The PRC barrel domain occupies 99-174 (KDEFYVRDLI…IVLIQPELWN (76 aa)).

Belongs to the RimM family. Binds ribosomal protein uS19.

Its subcellular location is the cytoplasm. Its function is as follows. An accessory protein needed during the final step in the assembly of 30S ribosomal subunit, possibly for assembly of the head region. Essential for efficient processing of 16S rRNA. May be needed both before and after RbfA during the maturation of 16S rRNA. It has affinity for free ribosomal 30S subunits but not for 70S ribosomes. In Leptospira borgpetersenii serovar Hardjo-bovis (strain JB197), this protein is Ribosome maturation factor RimM.